We begin with the raw amino-acid sequence, 109 residues long: Large ribosomal subunit protein eL30 (109 aa).

It belongs to the eukaryotic ribosomal protein eL30 family.

This is Large ribosomal subunit protein eL30 (RPL30) from Yarrowia lipolytica (strain CLIB 122 / E 150) (Yeast).